The sequence spans 180 residues: Ribosome maturation factor RimM (180 aa).

The 74-residue stretch at Pro104–Leu177 folds into the PRC barrel domain.

This sequence belongs to the RimM family. Binds ribosomal protein uS19.

The protein resides in the cytoplasm. In terms of biological role, an accessory protein needed during the final step in the assembly of 30S ribosomal subunit, possibly for assembly of the head region. Essential for efficient processing of 16S rRNA. May be needed both before and after RbfA during the maturation of 16S rRNA. It has affinity for free ribosomal 30S subunits but not for 70S ribosomes. In Salinispora tropica (strain ATCC BAA-916 / DSM 44818 / JCM 13857 / NBRC 105044 / CNB-440), this protein is Ribosome maturation factor RimM.